The chain runs to 122 residues: Phosphoribosyl-ATP pyrophosphatase (122 aa).

This sequence belongs to the PRA-PH family.

It is found in the cytoplasm. The catalysed reaction is 1-(5-phospho-beta-D-ribosyl)-ATP + H2O = 1-(5-phospho-beta-D-ribosyl)-5'-AMP + diphosphate + H(+). It participates in amino-acid biosynthesis; L-histidine biosynthesis; L-histidine from 5-phospho-alpha-D-ribose 1-diphosphate: step 2/9. The protein is Phosphoribosyl-ATP pyrophosphatase of Burkholderia thailandensis (strain ATCC 700388 / DSM 13276 / CCUG 48851 / CIP 106301 / E264).